The primary structure comprises 255 residues: Putative esterase YitV (255 aa).

This chain is Putative esterase YitV (yitV), found in Bacillus subtilis (strain 168).